Consider the following 184-residue polypeptide: MKKQDISVKTVVAIGIGAAVFVILGRFVVIPTGFPNTNIETSYAFLALISAIFGPFAGLMTGLVGHAIKDFTTYGSAWWSWVICSGIIGCLYGWIGLKLNLSSGRFSRKSMVYFNIGQIIANIICWALIAPTLDILIYNEPANKVYTQGVISAVLNIISVGIIGTILLKAYASSQIKKGSLRKE.

Helical transmembrane passes span 11 to 31 (VVAI…VVIP), 44 to 64 (AFLA…TGLV), 77 to 97 (AWWS…WIGL), 116 to 136 (IGQI…LDIL), and 148 to 168 (QGVI…TILL).

Belongs to the UPF0397 family.

It is found in the cell membrane. The sequence is that of UPF0397 protein SAOUHSC_03020 from Staphylococcus aureus (strain NCTC 8325 / PS 47).